We begin with the raw amino-acid sequence, 245 residues long: Ribonuclease PH (245 aa).

Phosphate is bound by residues Arg-86 and 124–126; that span reads GTR.

It belongs to the RNase PH family. As to quaternary structure, homohexameric ring arranged as a trimer of dimers.

The catalysed reaction is tRNA(n+1) + phosphate = tRNA(n) + a ribonucleoside 5'-diphosphate. Phosphorolytic 3'-5' exoribonuclease that plays an important role in tRNA 3'-end maturation. Removes nucleotide residues following the 3'-CCA terminus of tRNAs; can also add nucleotides to the ends of RNA molecules by using nucleoside diphosphates as substrates, but this may not be physiologically important. Probably plays a role in initiation of 16S rRNA degradation (leading to ribosome degradation) during starvation. This is Ribonuclease PH from Bacillus mycoides (strain KBAB4) (Bacillus weihenstephanensis).